The chain runs to 320 residues: Cytochrome f (320 aa).

The N-terminal stretch at methionine 1–alanine 35 is a signal peptide. 4 residues coordinate heme: tyrosine 36, cysteine 56, cysteine 59, and histidine 60. The chain crosses the membrane as a helical span at residues valine 286–lysine 306.

It belongs to the cytochrome f family. In terms of assembly, the 4 large subunits of the cytochrome b6-f complex are cytochrome b6, subunit IV (17 kDa polypeptide, petD), cytochrome f and the Rieske protein, while the 4 small subunits are PetG, PetL, PetM and PetN. The complex functions as a dimer. Heme serves as cofactor.

The protein localises to the plastid. The protein resides in the chloroplast thylakoid membrane. Component of the cytochrome b6-f complex, which mediates electron transfer between photosystem II (PSII) and photosystem I (PSI), cyclic electron flow around PSI, and state transitions. The polypeptide is Cytochrome f (Hordeum vulgare (Barley)).